Reading from the N-terminus, the 277-residue chain is Diaminopimelate epimerase (277 aa).

2 residues coordinate substrate: N11 and N62. C71 (proton donor) is an active-site residue. Residues 72–73, N160, N193, and 211–212 contribute to the substrate site; these read GN and ER. C220 serves as the catalytic Proton acceptor. 221–222 is a substrate binding site; sequence GT.

The protein belongs to the diaminopimelate epimerase family. As to quaternary structure, homodimer.

The protein resides in the cytoplasm. The catalysed reaction is (2S,6S)-2,6-diaminopimelate = meso-2,6-diaminopimelate. It participates in amino-acid biosynthesis; L-lysine biosynthesis via DAP pathway; DL-2,6-diaminopimelate from LL-2,6-diaminopimelate: step 1/1. In terms of biological role, catalyzes the stereoinversion of LL-2,6-diaminopimelate (L,L-DAP) to meso-diaminopimelate (meso-DAP), a precursor of L-lysine. The sequence is that of Diaminopimelate epimerase from Methanococcus maripaludis (strain C6 / ATCC BAA-1332).